Consider the following 173-residue polypeptide: MKRSEKAAIIEQLKAKADAAPIAVVTDFKGMPVEELTRLRVKLRESGGDYTVVKNTLARIALTGGTHDVLKDNFSENCGVAFGSEDPVAVAKALVEFRKGSKLFAIRFGSLEGQFLDDKQLDALAKLPGKQELLAKALGTMNAVPTNFVCLFANLLRNFLYALKAIQEQKEAA.

The protein belongs to the universal ribosomal protein uL10 family. Part of the ribosomal stalk of the 50S ribosomal subunit. The N-terminus interacts with L11 and the large rRNA to form the base of the stalk. The C-terminus forms an elongated spine to which L12 dimers bind in a sequential fashion forming a multimeric L10(L12)X complex.

Forms part of the ribosomal stalk, playing a central role in the interaction of the ribosome with GTP-bound translation factors. In Oleidesulfovibrio alaskensis (strain ATCC BAA-1058 / DSM 17464 / G20) (Desulfovibrio alaskensis), this protein is Large ribosomal subunit protein uL10.